Here is a 137-residue protein sequence, read N- to C-terminus: Nucleoside diphosphate kinase (137 aa).

The ATP site is built by Lys11, Phe59, Arg87, Thr93, Arg104, and Asn114. The Pros-phosphohistidine intermediate role is filled by His117.

The protein belongs to the NDK family. In terms of assembly, homotetramer. The cofactor is Mg(2+).

The protein resides in the cytoplasm. It catalyses the reaction a 2'-deoxyribonucleoside 5'-diphosphate + ATP = a 2'-deoxyribonucleoside 5'-triphosphate + ADP. It carries out the reaction a ribonucleoside 5'-diphosphate + ATP = a ribonucleoside 5'-triphosphate + ADP. Its function is as follows. Major role in the synthesis of nucleoside triphosphates other than ATP. The ATP gamma phosphate is transferred to the NDP beta phosphate via a ping-pong mechanism, using a phosphorylated active-site intermediate. This chain is Nucleoside diphosphate kinase, found in Parafrankia sp. (strain EAN1pec).